Here is a 32-residue protein sequence, read N- to C-terminus: Jingzhaotoxin F4-32.60 (32 aa).

3 disulfides stabilise this stretch: Cys2–Cys17, Cys9–Cys22, and Cys16–Cys29. Asp31 is modified (aspartic acid 1-amide).

It belongs to the neurotoxin 10 (Hwtx-1) family. 30 (Jztx-14) subfamily. Post-translationally, amidated as well as non-amidated forms are found in the venom. As to expression, expressed by the venom gland.

The protein localises to the secreted. Its function is as follows. Probable ion channel inhibitor. This chain is Jingzhaotoxin F4-32.60, found in Chilobrachys guangxiensis (Chinese earth tiger tarantula).